Here is a 160-residue protein sequence, read N- to C-terminus: Phosphopantetheine adenylyltransferase (160 aa).

Residue Ser-9 coordinates substrate. ATP-binding positions include Ser-9 to Phe-10 and His-17. Residues Lys-41, Leu-73, and Lys-87 each contribute to the substrate site. Residues Gly-88–Arg-90, Glu-98, and Tyr-123–Ser-129 each bind ATP.

It belongs to the bacterial CoaD family. In terms of assembly, homohexamer. Mg(2+) is required as a cofactor.

Its subcellular location is the cytoplasm. The enzyme catalyses (R)-4'-phosphopantetheine + ATP + H(+) = 3'-dephospho-CoA + diphosphate. It participates in cofactor biosynthesis; coenzyme A biosynthesis; CoA from (R)-pantothenate: step 4/5. Reversibly transfers an adenylyl group from ATP to 4'-phosphopantetheine, yielding dephospho-CoA (dPCoA) and pyrophosphate. In Caldanaerobacter subterraneus subsp. tengcongensis (strain DSM 15242 / JCM 11007 / NBRC 100824 / MB4) (Thermoanaerobacter tengcongensis), this protein is Phosphopantetheine adenylyltransferase.